A 455-amino-acid polypeptide reads, in one-letter code: DNA repair protein RadA (455 aa).

Residues 11 to 28 form a C4-type zinc finger; it reads CVGCGYVHPKWLGRCPEC. 97–104 lines the ATP pocket; the sequence is GEPGIGKS. A RadA KNRFG motif motif is present at residues 250–254; sequence KNRFG. A lon-protease-like region spans residues 350-455; sequence DIYVNVAGGI…IAEIFSKAKA (106 aa).

The protein belongs to the RecA family. RadA subfamily.

Its function is as follows. DNA-dependent ATPase involved in processing of recombination intermediates, plays a role in repairing DNA breaks. Stimulates the branch migration of RecA-mediated strand transfer reactions, allowing the 3' invading strand to extend heteroduplex DNA faster. Binds ssDNA in the presence of ADP but not other nucleotides, has ATPase activity that is stimulated by ssDNA and various branched DNA structures, but inhibited by SSB. Does not have RecA's homology-searching function. In Treponema pallidum (strain Nichols), this protein is DNA repair protein RadA.